Here is a 35-residue protein sequence, read N- to C-terminus: U1-segestritoxin-Sf1a (35 aa).

2 cysteine pairs are disulfide-bonded: Cys10–Cys22 and Cys17–Cys28. A keys region for toxin activity region spans residues 31–33 (DPW).

It belongs to the neurotoxin 16 (SFI) family. In terms of tissue distribution, expressed by the venom gland.

It is found in the secreted. Its function is as follows. Insecticidal toxin. The chain is U1-segestritoxin-Sf1a from Segestria florentina (Tube-web spider).